The following is a 699-amino-acid chain: Probable xyloglucan glycosyltransferase 12 (699 aa).

2 consecutive transmembrane segments (helical) span residues 126–146 (CLKV…AAYF) and 194–214 (IVLF…CFWI). The active site involves Asp-280. 2 residues coordinate substrate: Asp-339 and Asp-341. Asp-433 is a catalytic residue. The next 2 helical transmembrane spans lie at 511 to 531 (LILP…TMFV) and 536 to 556 (LPAW…ILPA). The segment at 616-646 (EKTTKHQRGVSAPETEAEKKAEKTKRKKKKH) is disordered. Glycyl lysine isopeptide (Lys-Gly) (interchain with G-Cter in ubiquitin) cross-links involve residues Lys-617 and Lys-620. Ser-626 is subject to Phosphoserine. The span at 637–646 (EKTKRKKKKH) shows a compositional bias: basic residues. 2 consecutive transmembrane segments (helical) span residues 649–668 (IYMK…TRSL) and 674–694 (IHFY…LDLI).

Belongs to the glycosyltransferase 2 family. Plant cellulose synthase-like C subfamily. Homodimer. Mainly expressed in roots, flowers and seeds, and, at very low levels, in seedlings, leaves and stems.

It is found in the golgi apparatus membrane. Functionally, probable beta-1,4-glucan synthase rather involved in the synthesis of the xyloglucan backbone than cellulose. Seems to work simultaneously with xyloglucan 6-xylosyltransferase. Xyloglucan is a noncellulosic polysaccharides of plant cell wall and consists of a glucan backbone substituted by xylose, galactose and fucose. In Arabidopsis thaliana (Mouse-ear cress), this protein is Probable xyloglucan glycosyltransferase 12.